Consider the following 81-residue polypeptide: Defensin-like protein 311 (81 aa).

A signal peptide spans 1–24 (MEKISAFFVILFLVSSCLVTMSVG). 3 disulfide bridges follow: C27-C50, C33-C57, and C41-C59.

It belongs to the DEFL family.

The protein localises to the secreted. This is Defensin-like protein 311 from Arabidopsis thaliana (Mouse-ear cress).